Reading from the N-terminus, the 246-residue chain is MSQIESPNPEPVFQLKGSMLAITVMELARSNLEALDRQLAAKVAQAPNFFSNTPLILALDKLAPNEGPVDLPGLVRICRQHGLRTLAIRANRIEDIAAAIAVDLPVLPPSGARERVIDPIEAEAPKKLPEKPPEPLIKPTRVITSPVRGGQQIYAQGGDLVVVAPVSPGAELLADGNIHVYGPMRGRALAGIKGDTKARIFCQQLSAELISIAGQYKVSEDLRRDPLWGSPVQVSLSGDVLNIIRL.

The protein belongs to the MinC family. As to quaternary structure, interacts with MinD and FtsZ.

Functionally, cell division inhibitor that blocks the formation of polar Z ring septums. Rapidly oscillates between the poles of the cell to destabilize FtsZ filaments that have formed before they mature into polar Z rings. Prevents FtsZ polymerization. This chain is Probable septum site-determining protein MinC, found in Pseudomonas syringae pv. tomato (strain ATCC BAA-871 / DC3000).